The following is a 473-amino-acid chain: Probable acid phosphatase DDB_G0284755 (473 aa).

His94 acts as the Nucleophile in catalysis. The Proton donor role is filled by Asp359.

This sequence belongs to the histidine acid phosphatase family.

The enzyme catalyses a phosphate monoester + H2O = an alcohol + phosphate. The protein is Probable acid phosphatase DDB_G0284755 of Dictyostelium discoideum (Social amoeba).